The primary structure comprises 270 residues: Bacterial microcompartment shell protein PduB (270 aa).

The interval 6 to 18 (LVEQIMAQVIARV) is probable helix that binds cargo to the BMC shell. 2 BMC circularly permuted domains span residues 47–152 (EFVG…DRTF) and 154–258 (DVYG…LATL).

The protein belongs to the EutL/PduB family. As to quaternary structure, homotrimerizes to form a pseudohexamer with a central pore. The trimers pack into an array. In terms of processing, in purified BMCs seen as a 28.0 kDa and 25.0 kDa form, both of which have been N-terminally sequenced and whose N-fMet is removed; the smaller form is called PduB'.

Its subcellular location is the bacterial microcompartment. It functions in the pathway polyol metabolism; 1,2-propanediol degradation. In terms of biological role, the two proteins produced are among the major shell proteins of the bacterial microcompartment (BMC) dedicated to 1,2-propanediol (1,2-PD) degradation. Required for structural integrity of BMCs and to mitigate propionaldehyde toxicity. The N-terminal 13 residues are important for correct assembly of the BMC shell. The isolated BMC shell component protein ratio for J:A:B':B:K:T:U is approximately 15:10:7:6:1:1:2. The N-terminus of the long form (PduB) is required for correct formation of BMCs, deletions in the first 37 residues have substantially reduced levels of the major lumen enzymes. May play a major role in binding the enzyme contents to the shell. Its function is as follows. The 1,2-PD-specific bacterial microcompartment (BMC) concentrates low levels of 1,2-PD catabolic enzymes, concentrates volatile reaction intermediates thus enhancing pathway flux and keeps the level of toxic, mutagenic propionaldehyde low. In Salmonella typhimurium (strain LT2 / SGSC1412 / ATCC 700720), this protein is Bacterial microcompartment shell protein PduB.